Consider the following 419-residue polypeptide: L-rhamnose isomerase (419 aa).

Mn(2+) contacts are provided by His262, Asp294, and Asp296.

The protein belongs to the rhamnose isomerase family. Homotetramer. Mn(2+) is required as a cofactor.

Its subcellular location is the cytoplasm. The enzyme catalyses L-rhamnopyranose = L-rhamnulose. It participates in carbohydrate degradation; L-rhamnose degradation; glycerone phosphate from L-rhamnose: step 1/3. In terms of biological role, catalyzes the interconversion of L-rhamnose and L-rhamnulose. This chain is L-rhamnose isomerase, found in Escherichia coli O81 (strain ED1a).